Consider the following 214-residue polypeptide: Pyridoxine/pyridoxamine 5'-phosphate oxidase (214 aa).

Residues 9 to 12 (RKNY) and lysine 67 contribute to the substrate site. FMN is bound by residues 62-67 (RMVLLK), 77-78 (YT), lysine 84, and glutamine 106. 3 residues coordinate substrate: tyrosine 124, arginine 128, and serine 132. FMN contacts are provided by residues 141–142 (QS) and tryptophan 186. Residue 192 to 194 (RLH) coordinates substrate. Residue arginine 196 coordinates FMN.

The protein belongs to the pyridoxamine 5'-phosphate oxidase family. In terms of assembly, homodimer. Requires FMN as cofactor.

It catalyses the reaction pyridoxamine 5'-phosphate + O2 + H2O = pyridoxal 5'-phosphate + H2O2 + NH4(+). The catalysed reaction is pyridoxine 5'-phosphate + O2 = pyridoxal 5'-phosphate + H2O2. The protein operates within cofactor metabolism; pyridoxal 5'-phosphate salvage; pyridoxal 5'-phosphate from pyridoxamine 5'-phosphate: step 1/1. It functions in the pathway cofactor metabolism; pyridoxal 5'-phosphate salvage; pyridoxal 5'-phosphate from pyridoxine 5'-phosphate: step 1/1. Catalyzes the oxidation of either pyridoxine 5'-phosphate (PNP) or pyridoxamine 5'-phosphate (PMP) into pyridoxal 5'-phosphate (PLP). This Gloeothece citriformis (strain PCC 7424) (Cyanothece sp. (strain PCC 7424)) protein is Pyridoxine/pyridoxamine 5'-phosphate oxidase.